Reading from the N-terminus, the 515-residue chain is MSDKVIIFDTTLRDGEQSPGASMTKDEKVRIARQLERLKVDVIEAGFAASSEGDFQAISAVAAAVKDSIVCSLARANDKDITRAADALQATNAKRIHAFLATSPLHMAVKLRMSPEEVLEQAKRSIRFACNLASDIEFSAEDGYRSEMDFLCRVVEAVINEGASTINIPDTVGYATPELYGEFIKTLRTRVPNSDKAVWSVHCHNDLGMAVANSLAGVKIGGARQIECTINGLGERAGNTALEEIVMSLRTRKDYFDMVCGIDATQIVPASKLVSQITGFIVQPNKAVVGANAFAHTSGIHQDGILKNRDTYEIMRAEDVGWSANKIVLGKLSGRNAFKQRLQELGITVEAEADLNVAFTRFKALADQKSEIFDEDIIAIMSDSAAAEEGEHYKFISLSQHSETGERPKSRVTFRMGDREISSEAEGNGPVDASLNAIEGIAKSGAEQLLYSVNAITSGTQSQGEVTVRLAKGGRIVNGVGTDPDIIAASAKAYLSALNKLHDPSQAKLNAQMTP.

Positions 5–268 (VIIFDTTLRD…VCGIDATQIV (264 aa)) constitute a Pyruvate carboxyltransferase domain. Residues Asp14, His202, His204, and Asn239 each coordinate Mn(2+). The tract at residues 394–515 (KFISLSQHSE…QAKLNAQMTP (122 aa)) is regulatory domain.

Belongs to the alpha-IPM synthase/homocitrate synthase family. LeuA type 1 subfamily. As to quaternary structure, homodimer. The cofactor is Mn(2+).

It localises to the cytoplasm. It catalyses the reaction 3-methyl-2-oxobutanoate + acetyl-CoA + H2O = (2S)-2-isopropylmalate + CoA + H(+). Its pathway is amino-acid biosynthesis; L-leucine biosynthesis; L-leucine from 3-methyl-2-oxobutanoate: step 1/4. Functionally, catalyzes the condensation of the acetyl group of acetyl-CoA with 3-methyl-2-oxobutanoate (2-ketoisovalerate) to form 3-carboxy-3-hydroxy-4-methylpentanoate (2-isopropylmalate). The chain is 2-isopropylmalate synthase from Polynucleobacter necessarius subsp. necessarius (strain STIR1).